We begin with the raw amino-acid sequence, 119 residues long: Large ribosomal subunit protein uL24 (119 aa).

It belongs to the universal ribosomal protein uL24 family. Part of the 50S ribosomal subunit.

In terms of biological role, one of two assembly initiator proteins, it binds directly to the 5'-end of the 23S rRNA, where it nucleates assembly of the 50S subunit. One of the proteins that surrounds the polypeptide exit tunnel on the outside of the subunit. The chain is Large ribosomal subunit protein uL24 from Paenarthrobacter aurescens (strain TC1).